Here is a 78-residue protein sequence, read N- to C-terminus: Acyl carrier protein (78 aa).

A Carrier domain is found at 1-77 (MSEVEKKVID…DAIDYIEKNL (77 aa)). Residue serine 37 is modified to O-(pantetheine 4'-phosphoryl)serine.

It belongs to the acyl carrier protein (ACP) family. In terms of processing, 4'-phosphopantetheine is transferred from CoA to a specific serine of apo-ACP by AcpS. This modification is essential for activity because fatty acids are bound in thioester linkage to the sulfhydryl of the prosthetic group.

It is found in the cytoplasm. The protein operates within lipid metabolism; fatty acid biosynthesis. Its function is as follows. Carrier of the growing fatty acid chain in fatty acid biosynthesis. The protein is Acyl carrier protein of Porphyromonas gingivalis (strain ATCC 33277 / DSM 20709 / CIP 103683 / JCM 12257 / NCTC 11834 / 2561).